Here is a 239-residue protein sequence, read N- to C-terminus: MVDAKQVRFIIGVIGNVISFGLFAAPAKTFWRIFKKKSVEEFSYVPYVATVMNCMLWVFYGLPVVHKDSILVSTINGVGLVIELFYVGVYLMYCGHKKNHRRNILGFLALEVILVVAIILITLFALKGDFVKQTFVGVICDVFNIAMYGAPSLAIIKVVKTKSVEYMPFLLSLVCFVNAGIWTTYSLIFKIDYYVLASNGIGTFLALSQLIVYFMYYKSTPKEKTVKPSEVEISATERV.

At 1–6 the chain is on the extracellular side; sequence MVDAKQ. A helical membrane pass occupies residues 7–27; the sequence is VRFIIGVIGNVISFGLFAAPA. A MtN3/slv 1 domain is found at 9-98; it reads FIIGVIGNVI…VYLMYCGHKK (90 aa). Over 28 to 44 the chain is Cytoplasmic; it reads KTFWRIFKKKSVEEFSY. Residues 45–65 traverse the membrane as a helical segment; that stretch reads VPYVATVMNCMLWVFYGLPVV. Topologically, residues 66–69 are extracellular; sequence HKDS. The chain crosses the membrane as a helical span at residues 70–90; that stretch reads ILVSTINGVGLVIELFYVGVY. At 91-103 the chain is on the cytoplasmic side; it reads LMYCGHKKNHRRN. Residues 104 to 124 form a helical membrane-spanning segment; it reads ILGFLALEVILVVAIILITLF. The Extracellular segment spans residues 125-135; that stretch reads ALKGDFVKQTF. A MtN3/slv 2 domain is found at 134-185; it reads TFVGVICDVFNIAMYGAPSLAIIKVVKTKSVEYMPFLLSLVCFVNAGIWTTY. The chain crosses the membrane as a helical span at residues 136-156; that stretch reads VGVICDVFNIAMYGAPSLAII. Over 157–168 the chain is Cytoplasmic; the sequence is KVVKTKSVEYMP. A helical transmembrane segment spans residues 169–189; it reads FLLSLVCFVNAGIWTTYSLIF. The Extracellular segment spans residues 190–194; the sequence is KIDYY. A helical membrane pass occupies residues 195 to 215; it reads VLASNGIGTFLALSQLIVYFM. At 216 to 239 the chain is on the cytoplasmic side; it reads YYKSTPKEKTVKPSEVEISATERV.

The protein belongs to the SWEET sugar transporter family. In terms of assembly, forms homooligomers and heterooligomers with SWEET4, SWEET5, SWEET6, SWEET7, SWEET9, SWEET10, SWEET11, SWEET13, SWEET15, SWEET16 and SWEET17. In terms of tissue distribution, expressed in inflorescences, embryo sacs and pollen, and at a lower level in stems. Barely detected in roots, leaves and seedlings.

It localises to the cell membrane. Mediates both low-affinity uptake and efflux of sugar across the plasma membrane. Required, in pollen, for microspore cell integrity and primexine pattern formation. The chain is Bidirectional sugar transporter SWEET8 from Arabidopsis thaliana (Mouse-ear cress).